The chain runs to 137 residues: Transcription antitermination protein NusB (137 aa).

The protein belongs to the NusB family.

In terms of biological role, involved in transcription antitermination. Required for transcription of ribosomal RNA (rRNA) genes. Binds specifically to the boxA antiterminator sequence of the ribosomal RNA (rrn) operons. The protein is Transcription antitermination protein NusB of Aeromonas salmonicida (strain A449).